Consider the following 172-residue polypeptide: Large ribosomal subunit protein uL10 (172 aa).

This sequence belongs to the universal ribosomal protein uL10 family. Part of the ribosomal stalk of the 50S ribosomal subunit. The N-terminus interacts with L11 and the large rRNA to form the base of the stalk. The C-terminus forms an elongated spine to which L12 dimers bind in a sequential fashion forming a multimeric L10(L12)X complex.

In terms of biological role, forms part of the ribosomal stalk, playing a central role in the interaction of the ribosome with GTP-bound translation factors. In Rhodopseudomonas palustris (strain HaA2), this protein is Large ribosomal subunit protein uL10.